The primary structure comprises 818 residues: Protein TOC75-3, chloroplastic (818 aa).

The N-terminal 79 residues, 1-79 (MAAFSVNGQL…LKNLAKPLAV (79 aa)), are a transit peptide targeting the chloroplast. The segment covering 15–41 (TSSTASTSLSSRRKFLSPSSSRLPRIS) has biased composition (low complexity). Residues 15–67 (TSSTASTSLSSRRKFLSPSSSRLPRISTQSPRVPSIKCSKSLPNRDTETSSKD) form a disordered region. Positions 57-67 (PNRDTETSSKD) are enriched in basic and acidic residues. The N-terminal 61 residues, 80–140 (ASVSSAASFF…KLFSPSPAVA (61 aa)), are a transit peptide targeting the chloroplast; outer membrane. POTRA domains follow at residues 141–246 (DEEQ…FAES), 247–364 (TWQS…VVEG), and 365–448 (DITQ…LKEL). Residues 141 to 473 (DEEQSPDWDS…GRGGAPTLAS (333 aa)) are Chloroplast intermembrane-facing. Residues 474–482 (FQPGGSVTF) form a beta stranded membrane-spanning segment. Topologically, residues 483–509 (EHRNLQGLNRSLMGSVTTSNFLNPQDD) are cytoplasmic. The beta stranded transmembrane segment at 510-518 (LSFKLEYVH) threads the bilayer. Topologically, residues 519–562 (PYLDGVYNPRNRTFKTSCFNSRKLSPVFTGGPGVEEVPPIWVDR) are chloroplast intermembrane. The chain crosses the membrane as a beta stranded span at residues 563 to 570 (AGVKANIT). Residues 571 to 578 (ENFTRQSK) lie on the Cytoplasmic side of the membrane. Residues 579–586 (FTYGLVME) traverse the membrane as a beta stranded segment. Over 587 to 693 (EITTRDESSH…VEQGAGKSPP (107 aa)) the chain is Chloroplast intermembrane. A beta stranded transmembrane segment spans residues 694 to 702 (PVLVLHGHY). At 703 to 714 (GGCVGDLPSYDA) the chain is on the cytoplasmic side. A beta stranded membrane pass occupies residues 715–723 (FVLGGPYSV). The Chloroplast intermembrane portion of the chain corresponds to 724 to 785 (RGYNMGELGA…VYRRTGQGSS (62 aa)). A beta stranded membrane pass occupies residues 786–792 (YGAGVKL). Residues 793 to 806 (GLVRAEYAVDHNNG) lie on the Cytoplasmic side of the membrane. The chain crosses the membrane as a beta stranded span at residues 807–814 (TGALFFRF). The Chloroplast intermembrane portion of the chain corresponds to 815-818 (GERY).

The protein belongs to the TOC75 family. Part of the TOC core complex that includes a protein for the specific recognition of transit peptides surrounded by a ring composed of four proteins forming translocation channels, and four to five GTP-binding proteins providing energy. This core complex can interact with components of the TIC complex to form a larger import complex. Chloroplastic protein precursors such as prSS (precursor of the RuBisCO small subunit) also interact with these complexes. The TOC complex contains a specific subset of polar lipids such as digalactosyldiacylglyceride (DGDG), phosphatidylcholine (PC) and phosphatidylglycerol (PG). TOC75-3 interacts with TOC34/OEP34, TOC159/TOC86, TOC132 and TOC120. Interacts with SP1. Interacts with TIC236. In terms of tissue distribution, mostly expressed in young and actively dividing photosynthetic tissues and, to a lower extent, in old leaves and roots. Particularly low levels in leaves after etiolation.

The protein localises to the plastid. It is found in the chloroplast outer membrane. In terms of biological role, essential protein. Mediates the insertion of proteins targeted to the outer membrane of chloroplasts. Required for the import of protein precursors into chloroplasts. Forms the voltage-dependent preprotein translocation channels (hydrophilic beta barrel) of the TOC complex in the chloroplastic outer membrane. This chain is Protein TOC75-3, chloroplastic, found in Arabidopsis thaliana (Mouse-ear cress).